A 558-amino-acid chain; its full sequence is Putative F-box/LRR-repeat protein R542 (558 aa).

The 47-residue stretch at 1 to 47 (MLLNLPYEILLIIFSLIESKKFFKLLSINKEVREFILTMLNQNPKSF) folds into the F-box domain. LRR repeat units lie at residues 73-105 (KSTI…GLSF), 139-176 (CGKI…NLQC), 177-220 (CMRI…KIDG), 251-284 (LDKL…DLSG), 285-317 (CINL…GLSY), 329-361 (CFRI…GFFY), 369-395 (VVGY…TISD), 420-444 (CNNI…DLRY), 445-477 (CNNI…GISY), and 481-508 (SKKI…VFKT).

The protein is Putative F-box/LRR-repeat protein R542 of Acanthamoeba polyphaga mimivirus (APMV).